The primary structure comprises 582 residues: Putative G-protein coupled receptor B0244.10 (582 aa).

The next 4 helical transmembrane spans lie at Leu25 to Leu45, Ile70 to Val90, Trp120 to Ile140, and Leu159 to Thr179. Residue Asn190 is glycosylated (N-linked (GlcNAc...) asparagine). Residues Leu199 to Ile218 form a helical membrane-spanning segment. Residues Asn221 and Asn237 are each glycosylated (N-linked (GlcNAc...) asparagine). Transmembrane regions (helical) follow at residues Ser253–Val273, Tyr296–Ile316, Thr329–Gly349, Ile377–Leu397, and Trp421–Val441. Asn457 carries an N-linked (GlcNAc...) asparagine glycan. 2 consecutive transmembrane segments (helical) span residues Thr475–Gly495 and Leu513–Leu533. Asn538 carries N-linked (GlcNAc...) asparagine glycosylation.

Belongs to the G-protein coupled receptor 1 family. B0244 subfamily.

It is found in the cell membrane. This is Putative G-protein coupled receptor B0244.10 from Caenorhabditis elegans.